The primary structure comprises 856 residues: Protein phosphatase 2C 32 (856 aa).

Phosphoserine occurs at positions 152, 189, and 201. One can recognise a PPM-type phosphatase domain in the interval 269 to 835 (ESCLESNRNL…DDVSVMVVSL (567 aa)). Residues D307 and G308 each coordinate Mn(2+). Disordered stretches follow at residues 340-373 (PSED…KSVV), 388-407 (GNTD…GPGK), and 446-485 (NPST…QISS). The span at 395-407 (ADGPPGDSAGPGK) shows a compositional bias: low complexity. Residues 471–485 (NSGQRHGTKKSQISS) are compositionally biased toward polar residues. D763 and D826 together coordinate Mn(2+).

Belongs to the PP2C family. Mg(2+) serves as cofactor. The cofactor is Mn(2+). As to expression, expressed in roots, leaves, stems, inflorescences, flowers and throughout the shoot meristem.

The protein localises to the nucleus. It catalyses the reaction O-phospho-L-seryl-[protein] + H2O = L-seryl-[protein] + phosphate. The catalysed reaction is O-phospho-L-threonyl-[protein] + H2O = L-threonyl-[protein] + phosphate. With respect to regulation, insensitive to okadaic acid. Functionally, involved in the regulation of pedicel length and of CLAVATA pathways controlling stem cell identity at shoot and flower meristems. This is Protein phosphatase 2C 32 (POL) from Arabidopsis thaliana (Mouse-ear cress).